A 72-amino-acid chain; its full sequence is Protein CYSTEINE-RICH TRANSMEMBRANE MODULE 1 (72 aa).

The segment covering 1-11 (MSQYDHNQSAG) has biased composition (polar residues). Residues 1 to 46 (MSQYDHNQSAGANPPPPMSTCTSPPPPIGYPTNQPSHGSVAQGKVE) are disordered. The span at 13–29 (NPPPPMSTCTSPPPPIG) shows a compositional bias: pro residues. The helical transmembrane segment at 49-65 (SKGDGFFKGCLAAMCCC) threads the bilayer.

The protein belongs to the CYSTM1 family. As to quaternary structure, heterodimers. Binds weakly to CYSTM7 and WIH1/CYSTM13. In terms of tissue distribution, mostly expressed in roots, flowers and siliques and, to a lower extent, in stems and leaves.

It is found in the cell membrane. It localises to the nucleus. Its function is as follows. May be involved in aluminium (Al) tolerance. Involved in resistance to abiotic stress. The chain is Protein CYSTEINE-RICH TRANSMEMBRANE MODULE 1 from Arabidopsis thaliana (Mouse-ear cress).